Consider the following 329-residue polypeptide: Glucosyl-3-phosphoglycerate synthase (329 aa).

Residues 55–59 (PALDE), Ser86, Lys119, and 139–141 (DSD) contribute to the UDP-alpha-D-glucose site. Asp141 contacts Mn(2+). (2R)-3-phosphoglycerate is bound at residue 189–192 (GRVT). 234-237 (YGVE) contributes to the UDP-alpha-D-glucose binding site. His263 lines the Mn(2+) pocket. Asn265 is a binding site for (2R)-3-phosphoglycerate.

It belongs to the glycosyltransferase 2 family. Homodimer. Mg(2+) serves as cofactor. Requires Mn(2+) as cofactor.

It catalyses the reaction an NDP-alpha-D-glucose + (2R)-3-phosphoglycerate = (2R)-2-O-(alpha-D-glucopyranosyl)-3-phospho-glycerate + a ribonucleoside 5'-diphosphate + H(+). It carries out the reaction (2R)-3-phosphoglycerate + UDP-alpha-D-glucose = (2R)-2-O-(alpha-D-glucopyranosyl)-3-phospho-glycerate + UDP + H(+). The enzyme catalyses GDP-D-glucose + (2R)-3-phosphoglycerate = (2R)-2-O-(alpha-D-glucopyranosyl)-3-phospho-glycerate + GDP + H(+). Its function is as follows. Involved in the biosynthesis of 6-O-methylglucose lipopolysaccarides (MGLPs). Catalyzes the transfer of the glucose moiety from UDP-alpha-D-glucose (UDP-Glc) to the position 2 of 3-phospho-D-glycerate (3-PGA) to form glucosyl-3-phosphoglycerate (GPG). To a lesser extent can also use GDP-Glc but not UDP-Gal or UDP-GlcNAc as the sugar donor. The sequence is that of Glucosyl-3-phosphoglycerate synthase from Mycolicibacterium paratuberculosis (strain ATCC BAA-968 / K-10) (Mycobacterium paratuberculosis).